The chain runs to 462 residues: Myo-inositol transporter 3B (462 aa).

The next 10 membrane-spanning stretches (helical) occupy residues 1 to 21, 31 to 51, 61 to 81, 91 to 111, 194 to 214, 218 to 238, 245 to 265, 289 to 309, 324 to 344, and 354 to 374; these read MAIL…ASSY, IILG…ITET, IGVN…IGAG, LLFA…HYLP, LCGF…LGLS, LGGL…MSLV, GLML…IIGF, VVIG…SHLV, GSGV…VSYL, and GTYG…VFCF.

Belongs to the major facilitator superfamily. Sugar transporter (TC 2.A.1.1) family.

It localises to the cell membrane. It carries out the reaction myo-inositol(out) + H(+)(out) = myo-inositol(in) + H(+)(in). Transporter for myo-inositol. This Cryptococcus neoformans var. grubii serotype A (strain H99 / ATCC 208821 / CBS 10515 / FGSC 9487) (Filobasidiella neoformans var. grubii) protein is Myo-inositol transporter 3B.